The chain runs to 1448 residues: Gag-Pol polyprotein (1448 aa).

Gly-2 carries the N-myristoyl glycine; by host lipid modification. Positions 16–22 (WEKIYLR) match the Nuclear export signal motif. The Nuclear localization signal motif lies at 26-32 (KKKYMMK). Over residues 107 to 116 (KMKAEQKEPE) the composition is skewed to basic and acidic residues. Residues 107–129 (KMKAEQKEPEPEQAAGAAAAPES) form a disordered region. A compositionally biased stretch (low complexity) spans 118–128 (EQAAGAAAAPE). A Phosphotyrosine; by host modification is found at Tyr-135. CCHC-type zinc fingers lie at residues 393 to 410 (IKCF…NCKA) and 414 to 431 (KGCW…DCRS). Basic and acidic residues-rich tracts occupy residues 446 to 460 (REAR…KERA) and 473 to 490 (GEDH…DREL). The tract at residues 446-490 (REARKFPPDNNKERANSPSNRELWVSGGEDHTGDREGRKGEDREL) is disordered. One can recognise a Peptidase A2 domain in the interval 517 to 586 (KEALLDTGAD…TPVNIIGRNF (70 aa)). The For protease activity; shared with dimeric partner role is filled by Asp-522. Residues 640 to 830 (EGKISRIGPE…PPFLWMGYEL (191 aa)) enclose the Reverse transcriptase domain. Positions 706, 781, and 782 each coordinate Mg(2+). The tract at residues 823-831 (FLWMGYELH) is RT 'primer grip'. The short motif at 994-1010 (WETWWTEYWQATWIPDW) is the Tryptophan repeat motif element. The RNase H type-1 domain maps to 1030–1153 (ISGAETYYVD…IDKLVSTGIR (124 aa)). Residues Asp-1039, Glu-1074, Asp-1094, and Asp-1145 each coordinate Mg(2+). The segment at 1159 to 1200 (DGIDKAQEEHERYHSNWKAMASDFNLPPIVAKEIVASCDKCQ) adopts an Integrase-type zinc-finger fold. Zn(2+)-binding residues include His-1168, His-1172, Cys-1196, and Cys-1199. The 151-residue stretch at 1210-1360 (INCSPGVWQL…TAGERIIDII (151 aa)) folds into the Integrase catalytic domain. Residues Asp-1220 and Asp-1272 each coordinate Mg(2+). The segment at residues 1379–1426 (FRVYYRDSREPTWKGPAKLLWKGEGAVVIQDNGDIKVVPRRKAKIIRD) is a DNA-binding region (integrase-type).

Homotrimer. Interacts with gp41 (via C-terminus). In terms of assembly, homodimer. The active site consists of two apposed aspartic acid residues. As to quaternary structure, heterodimer of p66 RT and p51 RT (RT p66/p51). Heterodimerization of RT is essential for DNA polymerase activity. Despite the sequence identities, p66 RT and p51 RT have distinct folding. Homotetramer; may further associate as a homohexadecamer. Mg(2+) is required as a cofactor. Post-translationally, specific enzymatic cleavages by the viral protease yield mature proteins. The protease is released by autocatalytic cleavage. The polyprotein is cleaved during and after budding, this process is termed maturation. Proteolytic cleavage of p66 RT removes the RNase H domain to yield the p51 RT subunit. Capsid protein p24 is phosphorylated.

The protein resides in the virion. The protein localises to the host nucleus. It localises to the host cytoplasm. Its subcellular location is the host cell membrane. It carries out the reaction Specific for a P1 residue that is hydrophobic, and P1' variable, but often Pro.. It catalyses the reaction Endohydrolysis of RNA in RNA/DNA hybrids. Three different cleavage modes: 1. sequence-specific internal cleavage of RNA. Human immunodeficiency virus type 1 and Moloney murine leukemia virus enzymes prefer to cleave the RNA strand one nucleotide away from the RNA-DNA junction. 2. RNA 5'-end directed cleavage 13-19 nucleotides from the RNA end. 3. DNA 3'-end directed cleavage 15-20 nucleotides away from the primer terminus.. The enzyme catalyses 3'-end directed exonucleolytic cleavage of viral RNA-DNA hybrid.. The catalysed reaction is DNA(n) + a 2'-deoxyribonucleoside 5'-triphosphate = DNA(n+1) + diphosphate. With respect to regulation, the viral protease is inhibited by many synthetic protease inhibitors (PIs), such as amprenavir, atazanavir, indinavir, loprinavir, nelfinavir, ritonavir and saquinavir. RT can be inhibited either by nucleoside RT inhibitors (NRTIs) or by non nucleoside RT inhibitors (NNRTIs). NRTIs act as chain terminators, whereas NNRTIs inhibit DNA polymerization by binding a small hydrophobic pocket near the RT active site and inducing an allosteric change in this region. Classical NRTIs are abacavir, adefovir (PMEA), didanosine (ddI), lamivudine (3TC), stavudine (d4T), tenofovir (PMPA), zalcitabine (ddC), and zidovudine (AZT). Classical NNRTIs are atevirdine (BHAP U-87201E), delavirdine, efavirenz (DMP-266), emivirine (I-EBU), and nevirapine (BI-RG-587). The tritherapies used as a basic effective treatment of AIDS associate two NRTIs and one NNRTI. Use of protease inhibitors in tritherapy regimens permit more ambitious therapeutic strategies. In terms of biological role, gag-Pol polyprotein and Gag polyprotein may regulate their own translation, by the binding genomic RNA in the 5'-UTR. At low concentration, Gag-Pol and Gag would promote translation, whereas at high concentration, the polyproteins encapsidate genomic RNA and then shut off translation. Functionally, matrix protein p17 has two main functions: in infected cell, it targets Gag and Gag-pol polyproteins to the plasma membrane via a multipartite membrane-binding signal, that includes its myristointegration complex. The myristoylation signal and the NLS exert conflicting influences its subcellular localization. The key regulation of these motifs might be phosphorylation of a portion of MA molecules on the C-terminal tyrosine at the time of virus maturation, by virion-associated cellular tyrosine kinase. Implicated in the release from host cell mediated by Vpu. Capsid protein p24 forms the conical core that encapsulates the genomic RNA-nucleocapsid complex in the virion. The core is constituted by capsid protein hexamer subunits. The core is disassembled soon after virion entry. Interaction with host PPIA/CYPA protects the virus from restriction by host TRIM5-alpha and from an unknown antiviral activity in host cells. This capsid restriction by TRIM5 is one of the factors which restricts SIV to the simian species. Its function is as follows. Nucleocapsid protein p7 encapsulates and protects viral dimeric unspliced (genomic) RNA. Binds these RNAs through its zinc fingers. Facilitates rearangement of nucleic acid secondary structure during retrotranscription of genomic RNA. This capability is referred to as nucleic acid chaperone activity. In terms of biological role, the aspartyl protease mediates proteolytic cleavages of Gag and Gag-Pol polyproteins during or shortly after the release of the virion from the plasma membrane. Cleavages take place as an ordered, step-wise cascade to yield mature proteins. This process is called maturation. Displays maximal activity during the budding process just prior to particle release from the cell. Also cleaves Nef and Vif, probably concomitantly with viral structural proteins on maturation of virus particles. Hydrolyzes host EIF4GI and PABP1 in order to shut off the capped cellular mRNA translation. The resulting inhibition of cellular protein synthesis serves to ensure maximal viral gene expression and to evade host immune response. Functionally, reverse transcriptase/ribonuclease H (RT) is a multifunctional enzyme that converts the viral dimeric RNA genome into dsDNA in the cytoplasm, shortly after virus entry into the cell. This enzyme displays a DNA polymerase activity that can copy either DNA or RNA templates, and a ribonuclease H (RNase H) activity that cleaves the RNA strand of RNA-DNA heteroduplexes in a partially processive 3' to 5' endonucleasic mode. Conversion of viral genomic RNA into dsDNA requires many steps. A tRNA binds to the primer-binding site (PBS) situated at the 5'-end of the viral RNA. RT uses the 3' end of the tRNA primer to perform a short round of RNA-dependent minus-strand DNA synthesis. The reading proceeds through the U5 region and ends after the repeated (R) region which is present at both ends of viral RNA. The portion of the RNA-DNA heteroduplex is digested by the RNase H, resulting in a ssDNA product attached to the tRNA primer. This ssDNA/tRNA hybridizes with the identical R region situated at the 3' end of viral RNA. This template exchange, known as minus-strand DNA strong stop transfer, can be either intra- or intermolecular. RT uses the 3' end of this newly synthesized short ssDNA to perform the RNA-dependent minus-strand DNA synthesis of the whole template. RNase H digests the RNA template except for two polypurine tracts (PPTs) situated at the 5'-end and near the center of the genome. It is not clear if both polymerase and RNase H activities are simultaneous. RNase H can probably proceed both in a polymerase-dependent (RNA cut into small fragments by the same RT performing DNA synthesis) and a polymerase-independent mode (cleavage of remaining RNA fragments by free RTs). Secondly, RT performs DNA-directed plus-strand DNA synthesis using the PPTs that have not been removed by RNase H as primers. PPTs and tRNA primers are then removed by RNase H. The 3' and 5' ssDNA PBS regions hybridize to form a circular dsDNA intermediate. Strand displacement synthesis by RT to the PBS and PPT ends produces a blunt ended, linear dsDNA copy of the viral genome that includes long terminal repeats (LTRs) at both ends. Integrase catalyzes viral DNA integration into the host chromosome, by performing a series of DNA cutting and joining reactions. This enzyme activity takes place after virion entry into a cell and reverse transcription of the RNA genome in dsDNA. The first step in the integration process is 3' processing. This step requires a complex comprising the viral genome, matrix protein, Vpr and integrase. This complex is called the pre-integration complex (PIC). The integrase protein removes 2 nucleotides from each 3' end of the viral DNA, leaving recessed CA OH's at the 3' ends. In the second step, the PIC enters cell nucleus. This process is mediated through integrase and Vpr proteins, and allows the virus to infect a non dividing cell. This ability to enter the nucleus is specific of lentiviruses, other retroviruses cannot and rely on cell division to access cell chromosomes. In the third step, termed strand transfer, the integrase protein joins the previously processed 3' ends to the 5' ends of strands of target cellular DNA at the site of integration. The 5'-ends are produced by integrase-catalyzed staggered cuts, 5 bp apart. A Y-shaped, gapped, recombination intermediate results, with the 5'-ends of the viral DNA strands and the 3' ends of target DNA strands remaining unjoined, flanking a gap of 5 bp. The last step is viral DNA integration into host chromosome. This involves host DNA repair synthesis in which the 5 bp gaps between the unjoined strands are filled in and then ligated. Since this process occurs at both cuts flanking the SIV genome, a 5 bp duplication of host DNA is produced at the ends of SIV integration. Alternatively, Integrase may catalyze the excision of viral DNA just after strand transfer, this is termed disintegration. In Pan troglodytes (Chimpanzee), this protein is Gag-Pol polyprotein (gag-pol).